The following is a 413-amino-acid chain: Divalent metal cation transporter MntH (413 aa).

At 1–19 (MTDNRVENSSGRAARKLRL) the chain is on the cytoplasmic side. A helical transmembrane segment spans residues 20–39 (ALMGPAFIAAIGYIDPGNFA). The Periplasmic segment spans residues 40–51 (TNIQAGASFGYQ). A helical membrane pass occupies residues 52–71 (LLWVVVWANLMAMLIQILSA). Residues 72–95 (KLGIATGKNLAEQIRDHYPRPVVW) are Cytoplasmic-facing. Residues 96–118 (FYWVQAEIIAMATDLAEFIGAAI) traverse the membrane as a helical segment. Residues 119–125 (GFKLILG) are Periplasmic-facing. Residues 126 to 145 (VSLLQGAVLTGIATFLILML) traverse the membrane as a helical segment. Residues 146–155 (QRRGQKPLEK) are Cytoplasmic-facing. Residues 156–175 (VIGGLLLFVAAAYIVELFFS) traverse the membrane as a helical segment. The Periplasmic portion of the chain corresponds to 176 to 196 (QPDMAQLGKGMVIPALPNPEA). Residues 197–220 (VFLAAGVLGATIMPHVIYLHSSLT) traverse the membrane as a helical segment. The Cytoplasmic portion of the chain corresponds to 221–238 (QHLHGGTRQQRYSATKWD). Residues 239-258 (VAIAMTIAGFVNLAMMATAA) traverse the membrane as a helical segment. Topologically, residues 259-276 (AAFHFSGHTGIADLDQAY) are periplasmic. The chain crosses the membrane as a helical span at residues 277-297 (LTLEPLLSHAAATVFGLSLVA). Over 298-327 (AGLSSTVVGTLAGQVVMQGFVRFHIPLWVR) the chain is Cytoplasmic. The helical transmembrane segment at 328–344 (RSITMLPSFIVILMGLD) threads the bilayer. Topologically, residues 345-350 (PTRILV) are periplasmic. A helical membrane pass occupies residues 351–370 (MSQVLLSFGIALALVPLLIF). Residues 371–387 (TSNATLMGELVNTRRVK) are Cytoplasmic-facing. A helical transmembrane segment spans residues 388-406 (QIGWIIVVLVVALNIWLLV). At 407 to 413 (GTVMGLS) the chain is on the periplasmic side.

The protein belongs to the NRAMP family.

It is found in the cell inner membrane. H(+)-stimulated, divalent metal cation uptake system. The sequence is that of Divalent metal cation transporter MntH from Salmonella gallinarum (strain 287/91 / NCTC 13346).